The primary structure comprises 505 residues: Cytochrome P450 CYP71D313 (505 aa).

The chain crosses the membrane as a helical span at residues 1 to 21 (MELQFPLFSIFFVTILFFFLF). C441 is a heme binding site. Residues 442 to 462 (PGIAFGIATIELPLALLLYHF) form a helical membrane-spanning segment.

It belongs to the cytochrome P450 family. Requires heme as cofactor.

It is found in the membrane. In terms of biological role, probable heme-thiolate monooxygenase. The sequence is that of Cytochrome P450 CYP71D313 from Panax ginseng (Korean ginseng).